Here is a 547-residue protein sequence, read N- to C-terminus: CTP synthase (547 aa).

An amidoligase domain region spans residues 1–265; that stretch reads MARFIFITGG…DQAVLDAFGI (265 aa). CTP is bound at residue Ser-13. Ser-13 is a binding site for UTP. ATP-binding positions include 14–19 and Asp-71; that span reads SLGKGL. 2 residues coordinate Mg(2+): Asp-71 and Glu-139. Residues 146–148, 186–191, and Lys-222 each bind CTP; these read DIE and KTKPTQ. UTP contacts are provided by residues 186 to 191 and Lys-222; that span reads KTKPTQ. The Glutamine amidotransferase type-1 domain occupies 291–546; that stretch reads KVAIVGKYTQ…VRAAKENSRL (256 aa). Residue Gly-353 participates in L-glutamine binding. Catalysis depends on Cys-380, which acts as the Nucleophile; for glutamine hydrolysis. L-glutamine-binding positions include 381 to 384, Glu-404, and Arg-474; that span reads LGMQ. Catalysis depends on residues His-519 and Glu-521.

This sequence belongs to the CTP synthase family. As to quaternary structure, homotetramer.

The catalysed reaction is UTP + L-glutamine + ATP + H2O = CTP + L-glutamate + ADP + phosphate + 2 H(+). It carries out the reaction L-glutamine + H2O = L-glutamate + NH4(+). The enzyme catalyses UTP + NH4(+) + ATP = CTP + ADP + phosphate + 2 H(+). Its pathway is pyrimidine metabolism; CTP biosynthesis via de novo pathway; CTP from UDP: step 2/2. Its activity is regulated as follows. Allosterically activated by GTP, when glutamine is the substrate; GTP has no effect on the reaction when ammonia is the substrate. The allosteric effector GTP functions by stabilizing the protein conformation that binds the tetrahedral intermediate(s) formed during glutamine hydrolysis. Inhibited by the product CTP, via allosteric rather than competitive inhibition. Its function is as follows. Catalyzes the ATP-dependent amination of UTP to CTP with either L-glutamine or ammonia as the source of nitrogen. Regulates intracellular CTP levels through interactions with the four ribonucleotide triphosphates. In Jannaschia sp. (strain CCS1), this protein is CTP synthase.